The primary structure comprises 435 residues: E3 ubiquitin-protein ligase PUB22 (435 aa).

One can recognise a U-box domain in the interval 6–81; sequence EIPSFFLCPI…QSWCTLNASY (76 aa).

In terms of assembly, interacts with RPN12A. Binds to EXO70B2. In terms of processing, auto-ubiquitinated leading to degradation via the 26S proteasome. This Auto-ubiquitination is repressed by the bacterial elicitor flg22 thus leading to a transiently increased protein stabilization and accumulation.

It localises to the cytoplasm. It carries out the reaction S-ubiquitinyl-[E2 ubiquitin-conjugating enzyme]-L-cysteine + [acceptor protein]-L-lysine = [E2 ubiquitin-conjugating enzyme]-L-cysteine + N(6)-ubiquitinyl-[acceptor protein]-L-lysine.. The protein operates within protein modification; protein ubiquitination. Functionally, E3 ubiquitin-protein ligase that negatively regulates water stress response. May control in coordination with PUB23 a drought signaling pathway by ubiquitinating cytosolic RPN12a. Acts as a negative regulator of the immunity triggered by the pathogen-associated molecular patterns (PAMPs), in association with PUB23 and PUB24. Regulates EXO70B2 ubiquitination and degradation via the 26S proteasome to attenuate PAMP-induced signaling. The protein is E3 ubiquitin-protein ligase PUB22 of Arabidopsis thaliana (Mouse-ear cress).